Reading from the N-terminus, the 351-residue chain is UDP-3-O-acylglucosamine N-acyltransferase (351 aa).

His240 acts as the Proton acceptor in catalysis.

This sequence belongs to the transferase hexapeptide repeat family. LpxD subfamily. In terms of assembly, homotrimer.

The catalysed reaction is a UDP-3-O-[(3R)-3-hydroxyacyl]-alpha-D-glucosamine + a (3R)-hydroxyacyl-[ACP] = a UDP-2-N,3-O-bis[(3R)-3-hydroxyacyl]-alpha-D-glucosamine + holo-[ACP] + H(+). It functions in the pathway bacterial outer membrane biogenesis; LPS lipid A biosynthesis. Its function is as follows. Catalyzes the N-acylation of UDP-3-O-acylglucosamine using 3-hydroxyacyl-ACP as the acyl donor. Is involved in the biosynthesis of lipid A, a phosphorylated glycolipid that anchors the lipopolysaccharide to the outer membrane of the cell. The polypeptide is UDP-3-O-acylglucosamine N-acyltransferase (Methylacidiphilum infernorum (isolate V4) (Methylokorus infernorum (strain V4))).